The primary structure comprises 263 residues: Proliferating cell nuclear antigen (263 aa).

Residues 61-80 (RCDRNLSMGMNLNNMAKMLR) mediate DNA binding.

Belongs to the PCNA family. As to quaternary structure, homotrimer. Interacts with FEN1A. Interacts with POLL. Interacts with RAD/GEN1. Interacts with DJA7 and DJA8. As to expression, expressed in proliferating tissues. Expressed in roots and root apex. Expressed at low levels in young leaves. Not detected in mature leaves. Highly expressed in shoot apical meristem (SAM). Expressed in flag leaves and panicles.

Its subcellular location is the nucleus. Functionally, this protein is an auxiliary protein of DNA polymerase delta and is involved in the control of eukaryotic DNA replication by increasing the polymerase's processibility during elongation of the leading strand. This is Proliferating cell nuclear antigen from Oryza sativa subsp. japonica (Rice).